A 266-amino-acid polypeptide reads, in one-letter code: Transmembrane domain-containing protein TMIGD3 (266 aa).

The segment at 1–20 (MEGSPAGPIEQKEARWESSW) is disordered. Residues 55–75 (FLPVMWLFILLSLALISDAMV) traverse the membrane as a helical segment. N-linked (GlcNAc...) asparagine glycosylation is present at asparagine 192. A helical transmembrane segment spans residues 213–233 (ILIICILITGLGIISVISHLT).

In terms of tissue distribution, expressed in the lung and bone. Expressed at lower levels in osteosarcoma tissues (at protein level).

It localises to the membrane. In terms of biological role, plays a suppressive role in osteosarcoma malignancy by inhibiting NF-kappa-B activity. This chain is Transmembrane domain-containing protein TMIGD3, found in Homo sapiens (Human).